The sequence spans 161 residues: Phosphopantetheine adenylyltransferase (161 aa).

Thr-9 is a substrate binding site. Residues 9–10 (TF) and His-17 contribute to the ATP site. Positions 41, 73, and 87 each coordinate substrate. ATP contacts are provided by residues 88-90 (GMR), Glu-98, and 123-129 (WSYVSST).

Belongs to the bacterial CoaD family. As to quaternary structure, homohexamer. It depends on Mg(2+) as a cofactor.

Its subcellular location is the cytoplasm. It catalyses the reaction (R)-4'-phosphopantetheine + ATP + H(+) = 3'-dephospho-CoA + diphosphate. Its pathway is cofactor biosynthesis; coenzyme A biosynthesis; CoA from (R)-pantothenate: step 4/5. In terms of biological role, reversibly transfers an adenylyl group from ATP to 4'-phosphopantetheine, yielding dephospho-CoA (dPCoA) and pyrophosphate. This chain is Phosphopantetheine adenylyltransferase, found in Actinobacillus succinogenes (strain ATCC 55618 / DSM 22257 / CCUG 43843 / 130Z).